We begin with the raw amino-acid sequence, 68 residues long: ATP synthase F(0) complex subunit 8 (68 aa).

Residues 8-24 (TWSITIVSMIITLFIMF) form a helical membrane-spanning segment. Lysine 54 is subject to N6-acetyllysine; alternate. Lysine 54 carries the post-translational modification N6-succinyllysine; alternate. Lysine 57 carries the post-translational modification N6-acetyllysine.

This sequence belongs to the ATPase protein 8 family. Component of the ATP synthase complex composed at least of ATP5F1A/subunit alpha, ATP5F1B/subunit beta, ATP5MC1/subunit c (homooctomer), MT-ATP6/subunit a, MT-ATP8/subunit 8, ATP5ME/subunit e, ATP5MF/subunit f, ATP5MG/subunit g, ATP5MK/subunit k, ATP5MJ/subunit j, ATP5F1C/subunit gamma, ATP5F1D/subunit delta, ATP5F1E/subunit epsilon, ATP5PF/subunit F6, ATP5PB/subunit b, ATP5PD/subunit d, ATP5PO/subunit OSCP. ATP synthase complex consists of a soluble F(1) head domain (subunits alpha(3) and beta(3)) - the catalytic core - and a membrane F(0) domain - the membrane proton channel (subunits c, a, 8, e, f, g, k and j). These two domains are linked by a central stalk (subunits gamma, delta, and epsilon) rotating inside the F1 region and a stationary peripheral stalk (subunits F6, b, d, and OSCP). Interacts with PRICKLE3.

The protein localises to the mitochondrion membrane. Subunit 8, of the mitochondrial membrane ATP synthase complex (F(1)F(0) ATP synthase or Complex V) that produces ATP from ADP in the presence of a proton gradient across the membrane which is generated by electron transport complexes of the respiratory chain. ATP synthase complex consist of a soluble F(1) head domain - the catalytic core - and a membrane F(1) domain - the membrane proton channel. These two domains are linked by a central stalk rotating inside the F(1) region and a stationary peripheral stalk. During catalysis, ATP synthesis in the catalytic domain of F(1) is coupled via a rotary mechanism of the central stalk subunits to proton translocation. In vivo, can only synthesize ATP although its ATP hydrolase activity can be activated artificially in vitro. Part of the complex F(0) domain. This Ceratotherium simum (White rhinoceros) protein is ATP synthase F(0) complex subunit 8.